A 104-amino-acid polypeptide reads, in one-letter code: Type IV secretion system protein PtlB homolog (104 aa).

The helical transmembrane segment at 30 to 50 (IALLGIWFSIAFLALFPVALL) threads the bilayer.

It belongs to the virB3 family.

It localises to the cell membrane. The sequence is that of Type IV secretion system protein PtlB homolog (ptlB) from Bordetella parapertussis (strain 12822 / ATCC BAA-587 / NCTC 13253).